A 421-amino-acid polypeptide reads, in one-letter code: Ankyrin repeat and SOCS box protein 6 (421 aa).

6 ANK repeats span residues Glu67–Phe97, Thr102–Arg131, His136–Ala166, His170–Ala205, Gly226–Glu255, and Glu260–Cys289. In terms of domain architecture, SOCS box spans Ala360 to Gly415.

The protein belongs to the ankyrin SOCS box (ASB) family. As to quaternary structure, binds APS. Identified in a complex with ELOB and ELOC. Interacts with CUL5 and RNF7. Interacts with SQSTM1.

It is found in the cytoplasm. Its pathway is protein modification; protein ubiquitination. Probable substrate-recognition component of a SCF-like ECS (Elongin-Cullin-SOCS-box protein) E3 ubiquitin-protein ligase complex which mediates the ubiquitination and subsequent proteasomal degradation of target proteins. May play a role in the regulation of cell proliferation and autophagy by promoting the ubiquitination and degradation of SQSTM1. The chain is Ankyrin repeat and SOCS box protein 6 (ASB6) from Pongo abelii (Sumatran orangutan).